Reading from the N-terminus, the 144-residue chain is Translation initiation factor 5A (144 aa).

The residue at position 38 (lysine 38) is a Hypusine.

The protein belongs to the eIF-5A family.

The protein resides in the cytoplasm. In terms of biological role, functions by promoting the formation of the first peptide bond. This is Translation initiation factor 5A from Nanoarchaeum equitans (strain Kin4-M).